A 523-amino-acid polypeptide reads, in one-letter code: Amino acid transporter protein 6 (523 aa).

At 1–19 (MLNVFGVSASMPDDSRSQK) the chain is on the cytoplasmic side. A helical membrane pass occupies residues 20–40 (MGLLGAISYIVGNIVGSGIFI). The Extracellular segment spans residues 41-51 (TPTSIIENVNS). Residues 52 to 72 (VGLSLAIWILAAFISMLGSFC) traverse the membrane as a helical segment. Residues 73–86 (YVELGTSIRLSGGD) are Cytoplasmic-facing. A helical transmembrane segment spans residues 87-107 (FAYLCFMKWYPVAFAFMCIGC). Residues 108-145 (TINYPATLAVQAQTFAEYVFRGAGVELDETSEFWAKKL) are Extracellular-facing. Residues 146-166 (LGFSLIILLMFMNFFSLKTFV) traverse the membrane as a helical segment. Residues 167-173 (QRFSILA) lie on the Cytoplasmic side of the membrane. A helical transmembrane segment spans residues 174-194 (SLAKIAATLLIIITGFYYLIF). The Extracellular portion of the chain corresponds to 195–214 (KHWKQNLEEPFKGSNWNPGP). The helical transmembrane segment at 215 to 235 (FVNALFAGLFSYDGWDILNFG) threads the bilayer. Topologically, residues 236–249 (AEEIENPKRTMPLS) are cytoplasmic. The helical transmembrane segment at 250-270 (IIIGMTCIGVIYVAVNVAYSI) threads the bilayer. The Extracellular portion of the chain corresponds to 271–290 (VLSPTEMIASNAVAIDFANK). An N-linked (GlcNAc...) asparagine glycan is attached at Asn289. Residues 291 to 311 (TLGAAAFVVPVMVAILLIGSL) form a helical membrane-spanning segment. Residues 312-348 (NSTMFSASRYLQAVSRQGHIPSAISGIAPNCDSPRVA) lie on the Cytoplasmic side of the membrane. A helical transmembrane segment spans residues 349–369 (LLVHILIAIAVSFLGDPDKLI). At 370 to 404 (NYVAFAQWSQRAFTMSALLYLRIRGRPRHPDRIQL) the chain is on the extracellular side. The chain crosses the membrane as a helical span at residues 405–425 (PIIMPILFFLVCTSMVVISII). The Cytoplasmic portion of the chain corresponds to 426 to 429 (DDFK). The helical transmembrane segment at 430 to 450 (SSAVGLGILLGGLIIFIIFVW) threads the bilayer. Topologically, residues 451–523 (DRALPSSHTF…GNGQFKCTRM (73 aa)) are extracellular. Residue Asn462 is glycosylated (N-linked (GlcNAc...) asparagine). The PDZ-binding motif motif lies at 521-523 (TRM).

Belongs to the amino acid-polyamine-organocation (APC) superfamily. Interacts (via PDZ-binding motif) with nfrl-1 (via PDZ 2 domain); the interaction with nrfl-1 is required to sequester aat-6 to the apical cell membrane of intestinal cells. In terms of tissue distribution, expressed at the apical cell membrane of intestinal cells.

It localises to the apical cell membrane. Amino acid transporter that mediates the uptake of the L-enantiomers of various amino acids, including L-glutamate. May play a role in promoting fertility. The polypeptide is Amino acid transporter protein 6 (Caenorhabditis elegans).